A 121-amino-acid polypeptide reads, in one-letter code: Peptidyl-tRNA hydrolase (121 aa).

This sequence belongs to the PTH2 family.

The protein localises to the cytoplasm. The catalysed reaction is an N-acyl-L-alpha-aminoacyl-tRNA + H2O = an N-acyl-L-amino acid + a tRNA + H(+). Its function is as follows. The natural substrate for this enzyme may be peptidyl-tRNAs which drop off the ribosome during protein synthesis. This Staphylothermus marinus (strain ATCC 43588 / DSM 3639 / JCM 9404 / F1) protein is Peptidyl-tRNA hydrolase.